The sequence spans 147 residues: uncharacterized protein (147 aa).

The HTH marR-type domain occupies 1–137 (MRDNTIGSLI…LYELMTKVHK (137 aa)). A DNA-binding region (H-T-H motif) is located at residues 53–76 (QMELAEKVTVTQGGISRMLTRLEK).

This is an uncharacterized protein from Bacillus cereus (strain ATCC 14579 / DSM 31 / CCUG 7414 / JCM 2152 / NBRC 15305 / NCIMB 9373 / NCTC 2599 / NRRL B-3711).